The primary structure comprises 295 residues: Bis(5'-nucleosyl)-tetraphosphatase, symmetrical (295 aa).

Residues 271–295 form a disordered region; sequence LSIEHPRHTHTPRRKAKKRHKRSPK. Residues 277 to 295 are compositionally biased toward basic residues; that stretch reads RHTHTPRRKAKKRHKRSPK.

Belongs to the Ap4A hydrolase family.

It carries out the reaction P(1),P(4)-bis(5'-adenosyl) tetraphosphate + H2O = 2 ADP + 2 H(+). Its function is as follows. Hydrolyzes diadenosine 5',5'''-P1,P4-tetraphosphate to yield ADP. The protein is Bis(5'-nucleosyl)-tetraphosphatase, symmetrical of Xylella fastidiosa (strain M23).